The primary structure comprises 271 residues: Exosome complex component Rrp42 (271 aa).

Belongs to the RNase PH family. Rrp42 subfamily. Component of the archaeal exosome complex. Forms a hexameric ring-like arrangement composed of 3 Rrp41-Rrp42 heterodimers. The hexameric ring associates with a trimer of Rrp4 and/or Csl4 subunits.

It is found in the cytoplasm. Its function is as follows. Non-catalytic component of the exosome, which is a complex involved in RNA degradation. Contributes to the structuring of the Rrp41 active site. The protein is Exosome complex component Rrp42 of Methanothermobacter thermautotrophicus (strain ATCC 29096 / DSM 1053 / JCM 10044 / NBRC 100330 / Delta H) (Methanobacterium thermoautotrophicum).